The primary structure comprises 750 residues: Methylmalonyl-CoA mutase, mitochondrial (750 aa).

The transit peptide at 1-32 directs the protein to the mitochondrion; it reads MLRAKNQLFLLSPHYLRQVKESSGSRLIQQRL. Residue glutamine 50 coordinates malonyl-CoA. Lysine 89 bears the N6-acetyllysine mark. Residues 96–99 and 106–110 contribute to the malonyl-CoA site; these read YPTM and TIRQY. N6-acetyllysine is present on lysine 212. Malonyl-CoA is bound by residues 216 to 218, arginine 228, lysine 255, histidine 265, and 304 to 306; these read TIQ and RLS. Lysine 335 is subject to N6-acetyllysine. N6-succinyllysine is present on lysine 343. Phosphoserine is present on serine 481. Lysine 595 is modified (N6-succinyllysine). The residue at position 602 (lysine 602) is an N6-acetyllysine. The region spanning 614 to 746 is the B12-binding domain; that stretch reads RPRLLVAKMG…DDIEKCLEKK (133 aa). Histidine 627 contributes to the adenosylcob(III)alamin binding site.

Belongs to the methylmalonyl-CoA mutase family. In terms of assembly, homodimer. Interacts (the apoenzyme form) with MMAA; the interaction is GTP dependent. Requires adenosylcob(III)alamin as cofactor.

It localises to the mitochondrion matrix. The protein localises to the mitochondrion. It is found in the cytoplasm. It carries out the reaction (R)-methylmalonyl-CoA = succinyl-CoA. With respect to regulation, during catalysis, accumulation of oxidized inactive cofactor hydroxocobalamin (OH2Cbl) leads to loss of MMUT activity. Interaction with MMAA decreases the rate of OH2Cbl formation and promotes the replacement of OH2Cbl by the active cofactor adenosylcobalamin (AdoCbl), thereby restoring MMUT activity. Inhibited by itaconyl-CoA, a metabolite that inactivates the coenzyme B12 cofactor. Inhibited at high concentration of substrate. Functionally, catalyzes the reversible isomerization of methylmalonyl-CoA (MMCoA) (generated from branched-chain amino acid metabolism and degradation of dietary odd chain fatty acids and cholesterol) to succinyl-CoA (3-carboxypropionyl-CoA), a key intermediate of the tricarboxylic acid cycle. The protein is Methylmalonyl-CoA mutase, mitochondrial of Homo sapiens (Human).